The sequence spans 199 residues: Ribosome biogenesis protein RLP24 (199 aa).

Residues 147–182 form a disordered region; that stretch reads KEQERAESVSEQEESEEEEEDMEIDSDEEEEEQLEK. The segment covering 156–179 has biased composition (acidic residues); the sequence is SEQEESEEEEEDMEIDSDEEEEEQ. S172 is subject to Phosphoserine.

It belongs to the eukaryotic ribosomal protein eL24 family. In terms of assembly, associated with nucleolar and cytoplasmic pre-60S particles. At the end of biogenesis it dissociates from cytoplasmic pre-60S particles and is likely to be exchanged for its ribosomal homolog, RPL24. Interacts (via C-terminus) with AFG2 (hexameric form); the interaction is direct, recruits AFG2 to pre-60S ribosomal particles and promotes AFG2 ATPase activity and RLP24 release from pre-60S ribosomal particles. Interacts with NOG1; the interaction is direct.

The protein localises to the cytoplasm. Its subcellular location is the nucleus. Its function is as follows. Involved in the biogenesis of the 60S ribosomal subunit. Ensures the docking of NOG1 to pre-60S ribosomal particles. Activates and recruits ATPase AFG2 to cytoplasmic pre-60S ribosomal particles. The chain is Ribosome biogenesis protein RLP24 (RLP24) from Saccharomyces cerevisiae (strain ATCC 204508 / S288c) (Baker's yeast).